We begin with the raw amino-acid sequence, 217 residues long: Glutathione S-transferase U20 (217 aa).

The GST N-terminal domain maps to 3-82 (NLPILLDYWP…YVDEAWPEKN (80 aa)). 3 residues coordinate glutathione: Ser13, Ile54, and Ser67. The GST C-terminal domain maps to 88–208 (DPYGRAQARF…LPDSEKIVAY (121 aa)).

Belongs to the GST superfamily. Tau family. Homodimerization. Interacts with JAR1/FIN219 under continuous far red (cFR) light to stimulate JAR1/FIN219 activity and substrate selectivity. Mostly associated with vascular tissues, especially near hydathodes.

Its subcellular location is the nucleus. It is found in the cytoplasm. It localises to the cytosol. It carries out the reaction RX + glutathione = an S-substituted glutathione + a halide anion + H(+). With respect to regulation, activated by JAR1/FIN219. Its function is as follows. Exhibits glutathione-dependent thiol transferase activities. Can use glutathione (GSH) and 1-chloro-2,4-dinitrobenzene (CDNB) as substrates. Involved in the regulation of far-red light influence on development. Regulator of the interplay between light and JA signaling by increasing JAR1/FIN219 efficiency. Maybe involved in gravitropic signal transduction. The chain is Glutathione S-transferase U20 from Arabidopsis thaliana (Mouse-ear cress).